A 552-amino-acid chain; its full sequence is HTH-type transcriptional regulator SgrR (552 aa).

The 116-residue stretch at 1 to 116 (MPSGRLQQQF…LISHLGRSFR (116 aa)) folds into the HTH marR-type domain. A DNA-binding region (H-T-H motif) is located at residues 26–49 (LNELADLLNCSRRHMRTLLNTMQA). The solute-binding stretch occupies residues 163–493 (ELEADIAHHW…RDWQDDAAQW (331 aa)).

Functionally, activates the small RNA gene sgrS under glucose-phosphate stress conditions as well as yfdZ. Represses its own transcription under both stress and non-stress conditions. Might act as a sensor of the intracellular accumulation of phosphoglucose by binding these molecules in its C-terminal solute-binding domain. This Salmonella choleraesuis (strain SC-B67) protein is HTH-type transcriptional regulator SgrR.